Here is a 237-residue protein sequence, read N- to C-terminus: N-alpha-acetyltransferase 40 (237 aa).

Glycine 2 carries N-myristoyl glycine lipidation. The 154-residue stretch at 63 to 216 folds into the N-acetyltransferase domain; the sequence is SGLEPATVDW…EDCSYEILSR (154 aa). Substrate-binding positions include tyrosine 85, 127-129, and tyrosine 138; that span reads DVE. Residues 140–142 and 148–153 each bind acetyl-CoA; these read VQL and RKGLGK. Substrate is bound at residue threonine 174. Asparagine 179 contributes to the acetyl-CoA binding site. Residues serine 197 and tyrosine 211 each coordinate substrate.

The protein belongs to the acetyltransferase family. NAA40 subfamily.

The protein localises to the cytoplasm. It localises to the nucleus. It carries out the reaction N-terminal L-seryl-[histone H4] + acetyl-CoA = N-terminal N(alpha)-acetyl-L-seryl-[histone H4] + CoA + H(+). The catalysed reaction is N-terminal L-seryl-[histone H2A] + acetyl-CoA = N-terminal N(alpha)-acetyl-L-seryl-[histone H2A] + CoA + H(+). N-alpha-acetyltransferase that specifically mediates the acetylation of the N-terminal residues of histones H4 and H2A. In contrast to other N-alpha-acetyltransferase, has a very specific selectivity for histones H4 and H2A N-terminus and specifically recognizes the 'Ser-Gly-Arg-Gly sequence'. Acts as a negative regulator of apoptosis. May play a role in hepatic lipid metabolism. In Mus musculus (Mouse), this protein is N-alpha-acetyltransferase 40.